The primary structure comprises 470 residues: tRNA (guanine(37)-N(1))-methyltransferase (470 aa).

S-adenosyl-L-methionine is bound by residues 304–305, 332–333, and asparagine 370; these read DL and DG.

It belongs to the class I-like SAM-binding methyltransferase superfamily. TRM5/TYW2 family. In terms of assembly, monomer.

Its subcellular location is the mitochondrion matrix. It is found in the nucleus. The protein localises to the cytoplasm. The catalysed reaction is guanosine(37) in tRNA + S-adenosyl-L-methionine = N(1)-methylguanosine(37) in tRNA + S-adenosyl-L-homocysteine + H(+). In terms of biological role, specifically methylates the N1 position of guanosine-37 in various cytoplasmic and mitochondrial tRNAs. Methylation is not dependent on the nature of the nucleoside 5' of the target nucleoside. This is the first step in the biosynthesis of wybutosine (yW), a modified base adjacent to the anticodon of tRNAs and required for accurate decoding. This Theileria parva (East coast fever infection agent) protein is tRNA (guanine(37)-N(1))-methyltransferase.